Consider the following 502-residue polypeptide: Glycerol kinase (502 aa).

An ADP-binding site is contributed by threonine 14. Positions 14, 15, and 16 each coordinate ATP. Threonine 14 is a sn-glycerol 3-phosphate binding site. Arginine 18 lines the ADP pocket. The sn-glycerol 3-phosphate site is built by arginine 84, glutamate 85, and tyrosine 136. Residues arginine 84, glutamate 85, and tyrosine 136 each contribute to the glycerol site. Histidine 232 carries the phosphohistidine; by HPr modification. Aspartate 246 serves as a coordination point for sn-glycerol 3-phosphate. Residues aspartate 246 and glutamine 247 each contribute to the glycerol site. Positions 268 and 311 each coordinate ADP. Threonine 268, glycine 311, glutamine 315, and glycine 412 together coordinate ATP. Glycine 412 and asparagine 416 together coordinate ADP.

The protein belongs to the FGGY kinase family. As to quaternary structure, homotetramer and homodimer (in equilibrium). The phosphoenolpyruvate-dependent sugar phosphotransferase system (PTS), including enzyme I, and histidine-containing protein (HPr) are required for the phosphorylation, which leads to the activation of the enzyme.

The catalysed reaction is glycerol + ATP = sn-glycerol 3-phosphate + ADP + H(+). Its pathway is polyol metabolism; glycerol degradation via glycerol kinase pathway; sn-glycerol 3-phosphate from glycerol: step 1/1. With respect to regulation, activated by phosphorylation and inhibited by fructose 1,6-bisphosphate (FBP). In terms of biological role, key enzyme in the regulation of glycerol uptake and metabolism. Catalyzes the phosphorylation of glycerol to yield sn-glycerol 3-phosphate. This chain is Glycerol kinase, found in Streptococcus sanguinis (strain SK36).